A 599-amino-acid chain; its full sequence is Aspartate--tRNA ligase (599 aa).

L-aspartate is bound at residue Glu-180. Positions 204–207 are aspartate; it reads QIFK. Arg-226 lines the L-aspartate pocket. ATP contacts are provided by residues 226–228 and Gln-235; that span reads RDE. L-aspartate is bound at residue His-454. Glu-488 provides a ligand contact to ATP. Arg-495 lines the L-aspartate pocket. 540–543 is an ATP binding site; that stretch reads GLDR.

The protein belongs to the class-II aminoacyl-tRNA synthetase family. Type 1 subfamily. As to quaternary structure, homodimer.

It is found in the cytoplasm. The catalysed reaction is tRNA(Asp) + L-aspartate + ATP = L-aspartyl-tRNA(Asp) + AMP + diphosphate. Its function is as follows. Catalyzes the attachment of L-aspartate to tRNA(Asp) in a two-step reaction: L-aspartate is first activated by ATP to form Asp-AMP and then transferred to the acceptor end of tRNA(Asp). This Clostridium botulinum (strain Alaska E43 / Type E3) protein is Aspartate--tRNA ligase.